A 154-amino-acid polypeptide reads, in one-letter code: 3-hydroxyacyl-[acyl-carrier-protein] dehydratase FabZ (154 aa).

His-54 is a catalytic residue.

The protein belongs to the thioester dehydratase family. FabZ subfamily.

Its subcellular location is the cytoplasm. The enzyme catalyses a (3R)-hydroxyacyl-[ACP] = a (2E)-enoyl-[ACP] + H2O. In terms of biological role, involved in unsaturated fatty acids biosynthesis. Catalyzes the dehydration of short chain beta-hydroxyacyl-ACPs and long chain saturated and unsaturated beta-hydroxyacyl-ACPs. The chain is 3-hydroxyacyl-[acyl-carrier-protein] dehydratase FabZ from Shewanella putrefaciens (strain CN-32 / ATCC BAA-453).